Reading from the N-terminus, the 589-residue chain is Proline--tRNA ligase (589 aa).

Belongs to the class-II aminoacyl-tRNA synthetase family. ProS type 1 subfamily. In terms of assembly, homodimer.

The protein localises to the cytoplasm. It catalyses the reaction tRNA(Pro) + L-proline + ATP = L-prolyl-tRNA(Pro) + AMP + diphosphate. In terms of biological role, catalyzes the attachment of proline to tRNA(Pro) in a two-step reaction: proline is first activated by ATP to form Pro-AMP and then transferred to the acceptor end of tRNA(Pro). As ProRS can inadvertently accommodate and process non-cognate amino acids such as alanine and cysteine, to avoid such errors it has two additional distinct editing activities against alanine. One activity is designated as 'pretransfer' editing and involves the tRNA(Pro)-independent hydrolysis of activated Ala-AMP. The other activity is designated 'posttransfer' editing and involves deacylation of mischarged Ala-tRNA(Pro). The misacylated Cys-tRNA(Pro) is not edited by ProRS. The polypeptide is Proline--tRNA ligase (Corynebacterium aurimucosum (strain ATCC 700975 / DSM 44827 / CIP 107346 / CN-1) (Corynebacterium nigricans)).